The sequence spans 405 residues: Cellobiose 2-epimerase (405 aa).

Belongs to the cellobiose 2-epimerase family.

It catalyses the reaction D-cellobiose = beta-D-glucosyl-(1-&gt;4)-D-mannopyranose. In terms of biological role, catalyzes the reversible epimerization of cellobiose to 4-O-beta-D-glucopyranosyl-D-mannose (Glc-Man). Can also epimerize lactose to epilactose. The sequence is that of Cellobiose 2-epimerase (ce13) from Eubacterium cellulosolvens.